We begin with the raw amino-acid sequence, 122 residues long: MIQMQTNLDVADNSGARRVMCIKVLGGSKRRYATVGDIIVVSVKEAIPRGKVKKGDVMKAVVVRVAKDIRRADGSVIRFDRNAAVLVNNQSEPVGTRIFGPVPRELRAKNHMKIISLAPEVL.

The protein belongs to the universal ribosomal protein uL14 family. Part of the 50S ribosomal subunit. Forms a cluster with proteins L3 and L19. In the 70S ribosome, L14 and L19 interact and together make contacts with the 16S rRNA in bridges B5 and B8.

Binds to 23S rRNA. Forms part of two intersubunit bridges in the 70S ribosome. This Afipia carboxidovorans (strain ATCC 49405 / DSM 1227 / KCTC 32145 / OM5) (Oligotropha carboxidovorans) protein is Large ribosomal subunit protein uL14.